The chain runs to 119 residues: Holo-[acyl-carrier-protein] synthase (119 aa).

Positions 8 and 60 each coordinate Mg(2+).

This sequence belongs to the P-Pant transferase superfamily. AcpS family. Mg(2+) serves as cofactor.

The protein localises to the cytoplasm. The catalysed reaction is apo-[ACP] + CoA = holo-[ACP] + adenosine 3',5'-bisphosphate + H(+). In terms of biological role, transfers the 4'-phosphopantetheine moiety from coenzyme A to a Ser of acyl-carrier-protein. The sequence is that of Holo-[acyl-carrier-protein] synthase from Staphylococcus haemolyticus (strain JCSC1435).